A 334-amino-acid polypeptide reads, in one-letter code: Protein-methionine-sulfoxide reductase catalytic subunit MsrP (334 aa).

A signal peptide (tat-type signal) is located at residues Met1–Ala44. Mo-molybdopterin is bound by residues Asn88, Tyr91–Glu92, Cys146, Thr181, Asn233, Arg238, and Gly249–Lys251.

The protein belongs to the MsrP family. As to quaternary structure, heterodimer of a catalytic subunit (MsrP) and a heme-binding subunit (MsrQ). Mo-molybdopterin is required as a cofactor. Predicted to be exported by the Tat system. The position of the signal peptide cleavage has not been experimentally proven.

The protein localises to the periplasm. The enzyme catalyses L-methionyl-[protein] + a quinone + H2O = L-methionyl-(S)-S-oxide-[protein] + a quinol. It carries out the reaction L-methionyl-[protein] + a quinone + H2O = L-methionyl-(R)-S-oxide-[protein] + a quinol. Its function is as follows. Part of the MsrPQ system that repairs oxidized periplasmic proteins containing methionine sulfoxide residues (Met-O), using respiratory chain electrons. Thus protects these proteins from oxidative-stress damage caused by reactive species of oxygen and chlorine generated by the host defense mechanisms. MsrPQ is essential for the maintenance of envelope integrity under bleach stress, rescuing a wide series of structurally unrelated periplasmic proteins from methionine oxidation, including the primary periplasmic chaperone SurA and the lipoprotein Pal. The catalytic subunit MsrP is non-stereospecific, being able to reduce both (R-) and (S-) diastereoisomers of methionine sulfoxide. This chain is Protein-methionine-sulfoxide reductase catalytic subunit MsrP, found in Escherichia fergusonii (strain ATCC 35469 / DSM 13698 / CCUG 18766 / IAM 14443 / JCM 21226 / LMG 7866 / NBRC 102419 / NCTC 12128 / CDC 0568-73).